A 1544-amino-acid chain; its full sequence is Transcriptional activator GLI3 (1544 aa).

Polar residues-rich tracts occupy residues 1–10 (MEAQSHSSTT) and 402–429 (NPVQVSSGPSESTQHNKPTSESAVSSTG). Disordered stretches follow at residues 1–83 (MEAQ…EERA) and 373–477 (SAFG…QEPE). Residues 463–476 (VKEEGDKDESKQEP) are compositionally biased toward basic and acidic residues. The segment at 482-509 (TNCHWEGCSREFDTQEQLVHHINNDHIH) adopts a C2H2-type 1 zinc-finger fold. The C2H2-type 2; degenerate zinc finger occupies 520–542 (LDCSREQKPFKAQYMLVVHMRRH). C2H2-type zinc fingers lie at residues 548–572 (HKCTFEGCTKAYSRLENLKTHLRSH), 578–603 (YVCEHEGCNKAFSNASDRAKHQNRTH), and 609–634 (YVCKIPGCTKRYTDPSSLRKHVKTVH). Disordered stretches follow at residues 622–728 (DPSS…YSNN), 865–919 (RSSG…DLPS), 1126–1155 (SVVLGNNNPSSFDRAPPASSQPAGSEVSKS), and 1327–1368 (HYQG…GNQS). Residues 634 to 650 (HGPEAHVTKKQRGDIHP) are compositionally biased toward basic and acidic residues. The span at 660 to 685 (SHSQTRSPGQQTQGATGEQKDLNSTT) shows a compositional bias: polar residues. The span at 686-701 (SRREECLQVKAVKSEK) shows a compositional bias: basic and acidic residues. Residues 702–728 (PMTSQPSPGGQSTCSSEQSPISNYSNN) are compositionally biased toward polar residues. The span at 865 to 882 (RSSGISPCFSSRRSSDAS) shows a compositional bias: low complexity. Positions 1330 to 1355 (GVNQSSPMTLGQVSPTSQSSLHQGPQ) are enriched in polar residues.

Belongs to the GLI C2H2-type zinc-finger protein family. Post-translationally, phosphorylation is essential for its proteolytic processing. The repressor form (GLI3R), a C-terminally truncated form is generated from the full-length GLI3 protein (GLI3FL) through proteolytic processing.

It is found in the nucleus. The protein localises to the cytoplasm. Its function is as follows. Has a dual function as a transcriptional activator and a repressor of the sonic hedgehog (Shh) pathway, and plays a role in limb development. The full-length GLI3 form (GLI3FL) acts as an activator (GLI3A) while GLI3R, its C-terminally truncated form, acts as a repressor. This Gallus gallus (Chicken) protein is Transcriptional activator GLI3 (GLI3).